A 739-amino-acid polypeptide reads, in one-letter code: uncharacterized protein (739 aa).

8 helical membrane-spanning segments follow: residues 53 to 73 (LALG…ALTV), 90 to 110 (WHLF…AAIP), 114 to 134 (LMFI…GTFM), 178 to 198 (TYIL…QLGL), 421 to 441 (LIWI…VCIV), 457 to 477 (AFLR…LALM), 491 to 511 (GLAM…LPAV), and 532 to 552 (IVYF…SWMY).

The protein belongs to the aromatic acid exporter ArAE (TC 2.A.85) family.

The protein resides in the cell membrane. This is an uncharacterized protein from Gluconobacter oxydans (strain 621H) (Gluconobacter suboxydans).